The chain runs to 204 residues: Nascent polypeptide-associated complex subunit alpha-like protein 3 (204 aa).

Basic and acidic residues predominate over residues 1 to 23 (MTAEQKVELAAKLEEQKIDLDKP). Disordered regions lie at residues 1–68 (MTAE…AMLK) and 141–165 (GETS…EEGV). Residues 24-43 (EVEDDDDNDEDDSEDDDEAE) are compositionally biased toward acidic residues. The residue at position 36 (serine 36) is a Phosphoserine. The span at 44 to 59 (GHDGEAGGRSKQSRSE) shows a compositional bias: basic and acidic residues. The NAC-A/B domain occupies 56–121 (SRSEKKSRKA…AKIEDLSSQL (66 aa)). Residues 141 to 152 (GETSSAATAAAV) are compositionally biased toward low complexity. Residues 153 to 164 (QDDDDEEVDEEG) show a composition bias toward acidic residues. One can recognise a UBA domain in the interval 159 to 204 (EVDEEGVEPKDIELVMTQAGVSKPRAVKALKLANGDIVSAIMELTT).

Belongs to the NAC-alpha family.

Its function is as follows. May promote appropriate targeting of ribosome-nascent polypeptide complexes. The chain is Nascent polypeptide-associated complex subunit alpha-like protein 3 from Arabidopsis thaliana (Mouse-ear cress).